The following is a 56-amino-acid chain: Large ribosomal subunit protein bL33 (56 aa).

It belongs to the bacterial ribosomal protein bL33 family.

This Ehrlichia ruminantium (strain Gardel) protein is Large ribosomal subunit protein bL33.